Consider the following 392-residue polypeptide: 4-hydroxybenzoate polyprenyltransferase, mitochondrial (392 aa).

A mitochondrion-targeting transit peptide spans 1–22 (MYALRHLRLQSARHFRSSYAAA). 9 helical membrane passes run 90-110 (IGTYLLFWPCAWSIALSADAG), 115-135 (LTMLGLFGTGALIMRGAGCTI), 163-183 (FDAIVFLSAQLSLGLLVLVQL), 184-204 (NWQSILLGASSLGLVITYPLM), 207-227 (VTYWPQLVLGMAFNWGALLGW), 236-256 (LAACLPLYLSGVCWTIVYDTI), 283-303 (VWLSGFTAAMLTGLSAAGWAC), 307-327 (VPYYAAVGVVGAHLVQQIYSL), and 339-359 (FISNHQVGLILFLGIVLGTLL). The segment at 365–392 (KKQRQSSLTTSTASSYVPALPQKPEVLS) is disordered. Residues 369 to 379 (QSSLTTSTASS) show a composition bias toward polar residues.

It belongs to the UbiA prenyltransferase family. It depends on Mg(2+) as a cofactor.

It is found in the mitochondrion inner membrane. It carries out the reaction an all-trans-polyprenyl diphosphate + 4-hydroxybenzoate = a 4-hydroxy-3-(all-trans-polyprenyl)benzoate + diphosphate. Its pathway is cofactor biosynthesis; ubiquinone biosynthesis. Functionally, catalyzes the prenylation of para-hydroxybenzoate (PHB) with an all-trans polyprenyl group. Mediates the second step in the final reaction sequence of coenzyme Q (CoQ) biosynthesis, which is the condensation of the polyisoprenoid side chain with PHB, generating the first membrane-bound Q intermediate. This Drosophila melanogaster (Fruit fly) protein is 4-hydroxybenzoate polyprenyltransferase, mitochondrial.